A 421-amino-acid chain; its full sequence is Autophagy-related protein 17 (421 aa).

It belongs to the ATG17 family. In terms of assembly, forms a complex with ATG13, ATG29 and CIS1/ATG31. The ATG17-ATG29-ATG31 complex interacts with the ATG1-ATG13 complex. Forms a complex with SNX4 and ATG20. Interacts with ATG11.

It localises to the cytoplasm. The protein localises to the preautophagosomal structure membrane. Its function is as follows. Autophagy-specific protein that functions with ATG13, ATG29, and CIS1/ATG31 in response to autophagy-inducing signals as a scaffold to recruit other ATG proteins to organize pre-autophagosomal structure (PAS) formation. Modulates the timing and magnitude of the autophagy response, such as the size of the sequestering vesicles, through interacting with and regulating ATG1 kinase activity. Plays particularly a role in pexophagy and nucleophagy. With ATG13, is required for ATG1 activation by autophosphorylation. Recruits ATG9 to the pre-autophagosomal structure. This chain is Autophagy-related protein 17, found in Kluyveromyces marxianus (strain DMKU3-1042 / BCC 29191 / NBRC 104275) (Yeast).